The sequence spans 489 residues: Argininosuccinate lyase (489 aa).

The segment at Gln462 to Ser489 is disordered.

This sequence belongs to the lyase 1 family. Argininosuccinate lyase subfamily.

It localises to the cytoplasm. The catalysed reaction is 2-(N(omega)-L-arginino)succinate = fumarate + L-arginine. The protein operates within amino-acid biosynthesis; L-arginine biosynthesis; L-arginine from L-ornithine and carbamoyl phosphate: step 3/3. The sequence is that of Argininosuccinate lyase from Synechococcus sp. (strain JA-3-3Ab) (Cyanobacteria bacterium Yellowstone A-Prime).